We begin with the raw amino-acid sequence, 84 residues long: MKTLLLTLVVVTIVCLDLGNSLKCYSSRTETMTCPEGEDKCEKYAVGLMHGSFFFIYTCTSKCHEGAYNVCCSTDLCNKSSTSG.

A signal peptide spans 1-21; sequence MKTLLLTLVVVTIVCLDLGNS. 4 disulfides stabilise this stretch: C24-C41, C34-C59, C63-C71, and C72-C77. H50 is a binding site for Zn(2+).

Belongs to the three-finger toxin family. Short-chain subfamily. Homodimer; non-covalently linked. Is able to form a tetramer of dimers in the presence of 2 zinc ions. Expressed by the venom gland.

It is found in the secreted. In terms of biological role, postsynaptic neurotoxin that produces potent, and completely reversible, postsynaptic neuromuscular blockade, as well as broad spectrum inhibition of human muscle and neuronal nicotinic acetylcholine receptors (nAChRs). Inhibition is potent or moderate, depending on the receptor (alpha-1-beta-1-delta-epsilon/CHRNA1-CHRNB1-CHRND-CHRNE (IC(50)=2.56 uM), alpha-4-beta-2/CHRNA4-CHRNB2 (IC(50)=1.8 uM), alpha-7/CHRNA7 (IC(50)=7 uM), and alpha-3-beta-2/CHRNA3-CHRNB2 (IC(50)=12.6 uM)). Acts as a competitive antagonist of ACh. Binds to chicken muscle-type nicotinic acetylcholine receptor (AChR) with high potency compared with the cloned human receptor. Unlike short-chain alpha-3FTxs that only bind to muscle nAChRs, this toxin utilizes dimerization to expand its pharmacological targets to block neuronal nAChRs. This Micrurus fulvius (Eastern coral snake) protein is Fulditoxin.